The chain runs to 317 residues: D-aminoacyl-tRNA deacylase (317 aa).

The protein belongs to the DtdA deacylase family. Requires Zn(2+) as cofactor. Ubiquitous.

The protein resides in the nucleus. It is found in the cytoplasm. The catalysed reaction is a D-aminoacyl-tRNA + H2O = a tRNA + a D-alpha-amino acid + H(+). The enzyme catalyses glycyl-tRNA(Ala) + H2O = tRNA(Ala) + glycine + H(+). Functionally, hydrolyzes D-aminoacyl-tRNA into D-amino acid and free tRNA. Broad specificity toward the amino acid, but strict specificity toward the D-isomer. Seems to be required for ethanol tolerance. The protein is D-aminoacyl-tRNA deacylase (GEK1) of Arabidopsis thaliana (Mouse-ear cress).